The following is a 2256-amino-acid chain: MLPCKKRSGVTESAQQQDDQEGEDLHLEAAVKPDTDQLPDCTSESLSWGQSHDSAGCPEVHSMQDVGSQLSVEGTPLSSKMLTQRVNLAVSEAVDVPVSQEIPVPSLESSHSLPVHMGKGRLQSTASRKGKKIAFMPGQVTREDGGDHTVPEEPPSGEHAEEVKAEGGELEMHSEGDLPSLSSGSQSAKPRAQPRKSFQPDGSAFPQEKSLGPLVRQAEEDMEDGGLFIPTEEQDGEESDKRKKTKKGTKRKRDGRGQEQGTMTYDPKVDDMLDRTLEDGAKQHNLTAVNVRNILHEVITNEHVVAMMKAAISETEDMPLFEPKMTRSKLKEVVEKGVVIPTWNISPIKKASETKQPPQFVDIHLEDDDSSDEEYQPDEEEEDETAEESLLESDVESAASSPRGVKRSRLRLSSEAAEADEESGVLSEVEKVATPALRHISAEVVPMGPPPPPKPKQTRDSTFMEKLNAVDEELAASPVCMDSFQPMEDSLIAFRTRSKMPLKDVPLGQLEAELQAPDITPDMYDPNTADDEDWKLWLGGLLNDDVENEDEADDDDDPEYNFLEDLDEPDTEDFRTDRAVRITKKEVNGLMEELFETVQSVVPSKFQDEMGFSNMEDDGPEEEERVTESRPSFNTPQALRFEEPLANLLNERHRTVKELLEQLKMKKSSVRQQPEVEKLKPQTEKVHQTLVLDPAQRSRLQQQMQQHVQLLTQIYLLTTSNPNLSSEASTTRVFLKELGTFAENSTALHQQFNPRFQTLFQPCNWVGAMQLIEDFTHISIDCSPHKTVKKTASEFPCLPKQVAWILATNKVFMYPELLPICSLKANNPRDKTIFTKAEDNLLALGLKHFEGTEFPKPLISKYLVTCKTAHQLTVRIKNLNLNRAPNNVIKFYKKTKQLPVLVRCCEEIQPHQWKPPIEKEEHRLPFWLKASLQSIQEELRNLAGGATAGGSVTAATETSTDQHLQKTSPVVGGDTQYPLLLPKGVVLKLKPGSKRFSRKAWRQKRPLVQKPLLIQPSPSVQPVFNPGKMATWPTQSEVPPSNTVVQIPHLIQPAAVLQTLPGFPSVGVCGEDSFESPAALPAMPSGSEARTSFPWSESQSAPPSSSAPKLMLPSLGPSKFRKPYVRRKPTRRKGAKASPCVKPAPIIHPTPVIFTVPATTVKVVSLGGGCNMIQPVTAAVAPSPQTIPITTLLVNPTSFPCSLNQPLVASSISPLLVSSNPLALPVTSLPEEKAHVSLDIAEGKNAPQNPEPKIKPQEPTPQCATVFSKEEPRSWHPSADTGNQEAVSESSACSWAAVKTEGQEGSSEKSVCGWTVVKTEDGGHAVQPLPQDPQDSLNSPSKDLLNMVKLEAEDCMEEISSDFPKQDIGEEVKEECCMELDRDSPQEKASSVSEMSKQTATPREETQAAKSPTVSQDAPDAIRDASKGLPQSTLSSMDQGTVLNSPPGKPEDSANADGQSVGTPAGTDTGAEKDGAEEEEEEDFDDLTQDEEDELSSASEESVLSVPELQETMEKLTWLASERRMSQEGESEEENSQEENSEPEEEEEEEAEGMETLQKEDEATDEAGGGAAEKPPSTLASPHTAPEVETSITPAGESIKAAGKGRSSHRARSRRGSRARASKDASKLLLLYDEDILDRDPLREQKDLAFAQAYLTRVREALQHIPGKYEDFLQIIYEFESNAQMHSAVDLFKSLQTLLHDWPQLLKDFAAFLLPEQALSCGLFEEQQAFEKSRKFLRQLEICFAENPSHHQKIIKVLQGCADCLPQDITELKTQMWQLLRGHDHLQDEFSIFFDHLRPAANRMGDFEEINWTEEKEYEFDGFEEVILPEVEEEEEPAKVSTASKSKRRKEIGVQHQDKESEWPEAAKDGSCPCHEGGPESKLKKSKRRNCHCSSKVCDSKSYKSKEPLELVGSGPLQEASTVPGTKEAGQGKDMSEEETMEGQENVEVSQNKTGRTTRKGEAPIPGSTVRTALLCSAEVTPIELSLEGPTCCSPETPRLPPQTGAVVCSVRRNQAGPEVVSCLGTSSIPPKEGEDQKAVANSETIAPLPETSETERLPGTVELPAPLPSPVSLSTRDTGRRHIYGKAGTQSWLLDNRAEAKAAHMVAPIRGTSSGASASEAAPTASREGLAEDSETQGKGPEAVLPKASEATVCANNSKVSSTGEKVVLWTREADRVILTMCQEQGAQPHTFSVISQQLGNKTPVEVSHRFRELMQLFHTACEASSEDEDDATSTSNADQLSDHGDLLSEEELDE.

3 disordered regions span residues 1–56 (MLPC…DSAG), 105–213 (PSLE…SLGP), and 227–266 (LFIP…MTYD). Over residues 23–35 (EDLHLEAAVKPDT) the composition is skewed to basic and acidic residues. Positions 40 to 53 (DCTSESLSWGQSHD) are enriched in polar residues. Over residues 141–176 (TREDGGDHTVPEEPPSGEHAEEVKAEGGELEMHSEG) the composition is skewed to basic and acidic residues. A compositionally biased stretch (basic residues) spans 242–254 (RKKTKKGTKRKRD). Ser346 bears the Phosphoserine mark. A compositionally biased stretch (acidic residues) spans 366–395 (EDDDSSDEEYQPDEEEEDETAEESLLESDV). 3 disordered regions span residues 366–428 (EDDD…VLSE), 441–460 (SAEV…QTRD), and 545–573 (DVEN…DTED). The segment covering 545-571 (DVENEDEADDDDDPEYNFLEDLDEPDT) has biased composition (acidic residues). The segment at 609 to 1363 (EMGFSNMEDD…DCMEEISSDF (755 aa)) is required for interaction with YY1, SIN3A and HDAC1, and transcriptional repression activity. The residue at position 783 (Ser783) is a Phosphoserine. 2 stretches are compositionally biased toward low complexity: residues 947–959 (TAGG…TETS) and 1094–1115 (PWSE…LPSL). 4 disordered regions span residues 947–969 (TAGG…KTSP), 1078–1141 (AALP…SPCV), 1241–1288 (AEGK…EAVS), and 1360–1620 (SSDF…SRAR). The segment covering 1119–1135 (KFRKPYVRRKPTRRKGA) has biased composition (basic residues). Positions 1364 to 1386 (PKQDIGEEVKEECCMELDRDSPQ) are enriched in basic and acidic residues. Composition is skewed to polar residues over residues 1387 to 1401 (EKAS…QTAT) and 1429 to 1444 (LPQS…TVLN). Ser1445 carries the phosphoserine modification. The span at 1475-1495 (GAEEEEEEDFDDLTQDEEDEL) shows a compositional bias: acidic residues. Low complexity predominate over residues 1496 to 1510 (SSASEESVLSVPELQ). Positions 1529-1553 (GESEEENSQEENSEPEEEEEEEAEG) are enriched in acidic residues. Residues 1606-1620 (RSSHRARSRRGSRAR) show a composition bias toward basic residues. 2 PAH domains span residues 1644–1716 (EQKD…LLPE) and 1726–1797 (EQQA…FDHL). Disordered regions lie at residues 1831–1886 (VEEE…LKKS) and 1909–1966 (LELV…APIP). A compositionally biased stretch (basic and acidic residues) spans 1851–1868 (EIGVQHQDKESEWPEAAK). Phosphoserine occurs at positions 1921 and 1994. 2 disordered regions span residues 2050 to 2078 (PETS…STRD) and 2110 to 2148 (IRGT…VLPK). The span at 2111–2129 (RGTSSGASASEAAPTASRE) shows a compositional bias: low complexity. The Myb-like domain maps to 2163-2216 (STGEKVVLWTREADRVILTMCQEQGAQPHTFSVISQQLGNKTPVEVSHRFRELM). The interval 2223-2256 (CEASSEDEDDATSTSNADQLSDHGDLLSEEELDE) is disordered.

In terms of assembly, found in a complex with YY1, SIN3A and HDAC1.

It localises to the nucleus. In terms of biological role, has transcriptional repressor activity, probably as part of a complex with YY1, SIN3A and HDAC1. Required for B cell lymphopoiesis. In Rattus norvegicus (Rat), this protein is GON-4-like protein (Gon4l).